The primary structure comprises 172 residues: Antibacterial protein PR-39 (172 aa).

Positions Met1 to Ala29 are cleaved as a signal peptide. Gln30 carries the pyrrolidone carboxylic acid modification. A propeptide spanning residues Gln30 to Val130 is cleaved from the precursor. The interval Asp61 to Val80 is disordered. Intrachain disulfides connect Cys85/Cys96 and Cys107/Cys124. The segment at Val130–Arg172 is disordered. Pro residues predominate over residues Pro136 to Arg172. Position 169 is a proline amide (Pro169).

The protein belongs to the cathelicidin family. As to expression, small intestine and bone marrow.

Its subcellular location is the secreted. In terms of biological role, exerts a potent antimicrobial activity against both E.coli and B.megaterium. The protein is Antibacterial protein PR-39 (PR39) of Sus scrofa (Pig).